A 343-amino-acid chain; its full sequence is Ribosomal RNA small subunit methyltransferase C (343 aa).

This sequence belongs to the methyltransferase superfamily. RsmC family. In terms of assembly, monomer.

It is found in the cytoplasm. It carries out the reaction guanosine(1207) in 16S rRNA + S-adenosyl-L-methionine = N(2)-methylguanosine(1207) in 16S rRNA + S-adenosyl-L-homocysteine + H(+). Its function is as follows. Specifically methylates the guanine in position 1207 of 16S rRNA in the 30S particle. The chain is Ribosomal RNA small subunit methyltransferase C from Escherichia coli O157:H7.